We begin with the raw amino-acid sequence, 154 residues long: Large ribosomal subunit protein uL30 (154 aa).

The protein belongs to the universal ribosomal protein uL30 family. Part of the 50S ribosomal subunit.

This chain is Large ribosomal subunit protein uL30, found in Methanococcus maripaludis (strain DSM 14266 / JCM 13030 / NBRC 101832 / S2 / LL).